The sequence spans 50 residues: MAMKLLECFEFKNTYITKTPIVIVIDNDKIIPNFDRKDGSPLFFKIVNFI.

This is an uncharacterized protein from Dictyostelium discoideum (Social amoeba).